A 297-amino-acid chain; its full sequence is Inactive beta selinene synthase (297 aa).

It belongs to the terpene synthase family. Monomer.

Its subcellular location is the cytoplasm. In terms of biological role, inactive selinene synthase. This is Inactive beta selinene synthase from Zea mays (Maize).